A 600-amino-acid chain; its full sequence is PWWP domain-containing protein 2B (600 aa).

Disordered stretches follow at residues Glu-81–Ala-115, Trp-143–Ser-171, Lys-186–Gly-350, Gly-366–Lys-408, and Asp-426–Pro-477. Residues Glu-104–Ala-115 are compositionally biased toward pro residues. The span at Thr-151–Ser-160 shows a compositional bias: basic residues. Polar residues predominate over residues Ser-187–Asn-200. Ser-190 and Ser-210 each carry phosphoserine. Over residues Glu-239–Pro-252 the composition is skewed to basic and acidic residues. Ser-254 is modified (phosphoserine). Positions Pro-286–Ser-297 are enriched in polar residues. Residues Glu-298–Gly-309 show a composition bias toward basic and acidic residues. Residues Pro-328–Lys-339 are compositionally biased toward pro residues. Over residues Asp-381–Ser-395 the composition is skewed to low complexity. Over residues Ser-443–Leu-456 the composition is skewed to polar residues. The residue at position 457 (Ser-457) is a Phosphoserine. Residues Ser-457 to Ser-468 are compositionally biased toward low complexity. The 61-residue stretch at Val-500 to Phe-560 folds into the PWWP domain.

In terms of assembly, component of a MTA1-specific subcomplex of the NuRD complex composed of PWWP2B, MTA1 and HDAC1 but does not contain CHD4 and MBD3. Interacts with MTA1, MTA2, MTA3, HDAC1, HDAC2, RBBP4, RBBP7, BRCC3 and ZNF516. Does not interact with CHD4 and MBD3. Deubiquitinated by BRCC3; leading to its stabilization. In terms of tissue distribution, expressed in the brown adipose tissue.

The protein resides in the nucleus. Functionally, chromatin-binding protein that acts as an adapter between distinct nucleosome components (H3K36me3 or H2A.Z) and chromatin-modifying complexes, contributing to the regulation of the levels of histone acetylation at actively transcribed genes. Competes with CHD4 and MBD3 for interaction with MTA1 to form a NuRD subcomplex, preventing the formation of full NuRD complex (containing CHD4 and MBD3), leading to recruitment of HDACs to gene promoters resulting in turn in the deacetylation of nearby H3K27 and H2A.Z. Plays a role in facilitating transcriptional elongation through regulation of histone acetylation. Negatively regulates brown adipocyte thermogenesis by interacting with and stabilizing HDAC1 at the UCP1 gene promoter, thereby promoting histone deacetylation at the promoter leading to the repression of UCP1 expression. The chain is PWWP domain-containing protein 2B (Pwwp2b) from Mus musculus (Mouse).